Reading from the N-terminus, the 536-residue chain is Aminopeptidase (536 aa).

Residues 1–24 (MSNKNNLRYALGALALSVSAASLA) form the signal peptide. Positions 152 to 255 (AGDVTAKVVP…ATYDNGVAWS (104 aa)) constitute a PA domain. T196 is subject to Phosphothreonine. Residues H296 and D308 each coordinate Zn(2+). The Proton acceptor role is filled by E340. E341, D369, and H467 together coordinate Zn(2+). A disulfide bridge connects residues C465 and C470.

The protein belongs to the peptidase M28 family. M28A subfamily. It depends on Zn(2+) as a cofactor.

Its subcellular location is the secreted. The catalysed reaction is Release of an N-terminal amino acid, Xaa-|-Yaa-, in which Xaa is preferably Leu, but may be other amino acids including Pro although not Arg or Lys, and Yaa may be Pro. Amino acid amides and methyl esters are also readily hydrolyzed, but rates on arylamides are exceedingly low.. A secreted aminopeptidase. Acts on free N-terminal amino groups with a very strong preference for Leu in the first position. This chain is Aminopeptidase, found in Pseudomonas aeruginosa (strain UCBPP-PA14).